We begin with the raw amino-acid sequence, 168 residues long: NADH-quinone oxidoreductase subunit E 2 (168 aa).

The [2Fe-2S] cluster site is built by Cys-77, Cys-82, Cys-118, and Cys-122.

This sequence belongs to the complex I 24 kDa subunit family. The cofactor is [2Fe-2S] cluster.

It catalyses the reaction a quinone + NADH + 5 H(+)(in) = a quinol + NAD(+) + 4 H(+)(out). Its function is as follows. NDH-1 shuttles electrons from NADH, via FMN and iron-sulfur (Fe-S) centers, to quinones in the respiratory chain. The immediate electron acceptor for the enzyme in this species is believed to be ubiquinone. Couples the redox reaction to proton translocation (for every two electrons transferred, four hydrogen ions are translocated across the cytoplasmic membrane), and thus conserves the redox energy in a proton gradient. This Rhizobium meliloti (strain 1021) (Ensifer meliloti) protein is NADH-quinone oxidoreductase subunit E 2 (nuoE2).